We begin with the raw amino-acid sequence, 111 residues long: Secreted RxLR effector protein 82 (111 aa).

An N-terminal signal peptide occupies residues 1–17 (MFHLYLLLVFETRYTCL). The short motif at 28 to 31 (RWLR) is the RxLR element.

Belongs to the RxLR effector family.

It localises to the secreted. It is found in the host nucleus. Functionally, secreted effector that acts as an elicitor that induces cell death in host plant cells. In Plasmopara viticola (Downy mildew of grapevine), this protein is Secreted RxLR effector protein 82.